The primary structure comprises 353 residues: MNTRRELPESPYLAAASGRSPHRVPVWFMRQAGRSLPEYRELRAQHRMLQACFDAELVCEITMQPVRRHKVDAAILFSDIVVPLKAAGIGLDIVPDVGPVIDNPIRTLGDVQAMPALESPQVAPVAEAVRLLTAELGDVPLIGFAGAPFTLASYLVEGGPSRHHERTKAMMLGESSTWHALMTALTDLTIAFLQAQVDAGVDALQVFDSWAGTLSLTDYREYVLPHSSRVFATMAAAGVPMTHFGVGTAELLGAMSEALAPGAARVVGVDWRTSLADAAARVLPGAALQGNLDPVVLLAGWPVVEKAVRRVVEDGRAAVAAGAAGHIFNLGHGVLPATDPGIITDAVELVHSL.

Residues 30–34, Asp-79, Tyr-154, Ser-209, and His-332 each bind substrate; that span reads RQAGR.

The protein belongs to the uroporphyrinogen decarboxylase family. In terms of assembly, homodimer.

The protein resides in the cytoplasm. It carries out the reaction uroporphyrinogen III + 4 H(+) = coproporphyrinogen III + 4 CO2. Its pathway is porphyrin-containing compound metabolism; protoporphyrin-IX biosynthesis; coproporphyrinogen-III from 5-aminolevulinate: step 4/4. Functionally, catalyzes the decarboxylation of four acetate groups of uroporphyrinogen-III to yield coproporphyrinogen-III. The polypeptide is Uroporphyrinogen decarboxylase (Mycolicibacterium smegmatis (strain ATCC 700084 / mc(2)155) (Mycobacterium smegmatis)).